Consider the following 419-residue polypeptide: Heparan-sulfate 6-O-sulfotransferase 3-B (419 aa).

Topologically, residues 1–7 (MNDKPNK) are cytoplasmic. The helical; Signal-anchor for type II membrane protein transmembrane segment at 8–28 (WIFIPILAILFVMIGYQYVCP) threads the bilayer. The Lumenal portion of the chain corresponds to 29 to 419 (AGGQACHFRT…EDYASQVVRW (391 aa)). N-linked (GlcNAc...) asparagine glycosylation is present at Asn77. Residue 101-109 (HIQKTGGTT) coordinates 3'-phosphoadenylyl sulfate. Residues 131-132 (KK), Arg148, Trp153, and His158 contribute to the substrate site. His158 serves as the catalytic Proton acceptor. 3'-phosphoadenylyl sulfate contacts are provided by Arg191 and Ser199. 2 residues coordinate substrate: His203 and Trp210. Asn270 and Asn275 each carry an N-linked (GlcNAc...) asparagine glycan. 323–325 (TQI) is a binding site for 3'-phosphoadenylyl sulfate. Asn326 is a glycosylation site (N-linked (GlcNAc...) asparagine). Residue 329–330 (RA) coordinates 3'-phosphoadenylyl sulfate. N-linked (GlcNAc...) asparagine glycosylation is found at Asn393 and Asn402.

The protein belongs to the sulfotransferase 6 family. In terms of tissue distribution, in early somitogenesis, expressed in presumptive forebrain and midbrain, tail bud and Kupffer's vesicle. During mid-somitogenesis, ubiquitous expression which is strongest in the somites and eye. During late somitogenesis, predominantly expressed in eye, hindbrain and ventral somites. At 24 hours post-fertilization (hpf), restricted to lens and neural retina, brain, otic vesicle and somites. At 36 hpf, brain expression is restricted to telencephalon. At 48 hpf, restricted to telencephalon and pectoral fin.

The protein resides in the membrane. The catalysed reaction is alpha-D-glucosaminyl-[heparan sulfate](n) + 3'-phosphoadenylyl sulfate = 6-sulfo-alpha-D-glucosaminyl-[heparan sulfate](n) + adenosine 3',5'-bisphosphate + H(+). Its function is as follows. 6-O-sulfation enzyme which catalyzes the transfer of sulfate from 3'-phosphoadenosine 5'-phosphosulfate (PAPS) to position 6 of the N-sulfoglucosamine residue (GlcNS) of heparan sulfate. The sequence is that of Heparan-sulfate 6-O-sulfotransferase 3-B from Danio rerio (Zebrafish).